A 262-amino-acid chain; its full sequence is tRNA (guanine-N(1)-)-methyltransferase (262 aa).

S-adenosyl-L-methionine-binding positions include Gly-111 and 130-135 (LGDFVL).

Belongs to the RNA methyltransferase TrmD family. Homodimer.

The protein resides in the cytoplasm. It catalyses the reaction guanosine(37) in tRNA + S-adenosyl-L-methionine = N(1)-methylguanosine(37) in tRNA + S-adenosyl-L-homocysteine + H(+). Specifically methylates guanosine-37 in various tRNAs. The protein is tRNA (guanine-N(1)-)-methyltransferase of Desulfitobacterium hafniense (strain Y51).